Here is a 103-residue protein sequence, read N- to C-terminus: Putative double-stranded DNA mimic protein HD_0986 (103 aa).

It belongs to the putative dsDNA mimic protein family.

May act as a double-stranded DNA (dsDNA) mimic. Probably regulates the activity of a dsDNA-binding protein. The chain is Putative double-stranded DNA mimic protein HD_0986 from Haemophilus ducreyi (strain 35000HP / ATCC 700724).